We begin with the raw amino-acid sequence, 63 residues long: Alpha-conotoxin-like PuSG1.2 (63 aa).

The signal sequence occupies residues 1–21; sequence MRCLALLVVTLLLFTATATTG. Positions 22–43 are excised as a propeptide; sequence ASNGMNAAASGEAPDSISLAVR. Cystine bridges form between Cys-46–Cys-52 and Cys-47–Cys-60. The tract at residues 48–50 is lacks the Ser-Xaa-Pro motif that is crucial for potent interaction with nAChR; the sequence is PDP.

Belongs to the conotoxin A superfamily. As to expression, expressed by the salivary gland.

It localises to the secreted. Functionally, alpha-conopeptides-like may act on postsynaptic membranes, they bind to the nicotinic acetylcholine receptors (nAChR) and thus inhibit them. Has possibly a distinct nAChR binding mode from other alpha-conotoxins, due to a different three residue motif (lacks the Ser-Xaa-Pro motif). The sequence is that of Alpha-conotoxin-like PuSG1.2 from Conus pulicarius (Flea-bitten cone).